A 446-amino-acid polypeptide reads, in one-letter code: Chromosomal replication initiator protein DnaA (446 aa).

Positions 1 to 72 are domain I, interacts with DnaA modulators; sequence MENILDLWNK…ADTIYELTGE (72 aa). Positions 72–109 are domain II; sequence EELSIKFIIPQNQDEVEAMPKSPIKKMSKEDPVDIPQN. Residues 110-326 form a domain III, AAA+ region region; it reads MLNPKYTFDT…GALIRVVAYS (217 aa). Residues Gly-154, Gly-156, Lys-157, and Thr-158 each coordinate ATP. The segment at 327–446 is domain IV, binds dsDNA; that stretch reads SLINKDINAD…HVKEIKEQLK (120 aa).

The protein belongs to the DnaA family. In terms of assembly, oligomerizes as a right-handed, spiral filament on DNA at oriC.

The protein localises to the cytoplasm. In terms of biological role, plays an essential role in the initiation and regulation of chromosomal replication. ATP-DnaA binds to the origin of replication (oriC) to initiate formation of the DNA replication initiation complex once per cell cycle. Binds the DnaA box (a 9 base pair repeat at the origin) and separates the double-stranded (ds)DNA. Forms a right-handed helical filament on oriC DNA; dsDNA binds to the exterior of the filament while single-stranded (ss)DNA is stabiized in the filament's interior. The ATP-DnaA-oriC complex binds and stabilizes one strand of the AT-rich DNA unwinding element (DUE), permitting loading of DNA polymerase. After initiation quickly degrades to an ADP-DnaA complex that is not apt for DNA replication. Binds acidic phospholipids. In Bacillus pumilus (strain SAFR-032), this protein is Chromosomal replication initiator protein DnaA.